Reading from the N-terminus, the 121-residue chain is NAD(P)H-quinone oxidoreductase subunit 3, chloroplastic (121 aa).

Helical transmembrane passes span 10-30 (FWAF…VSNL), 65-85 (MFAL…PWAM), and 90-110 (LGII…IGLI).

This sequence belongs to the complex I subunit 3 family. In terms of assembly, NDH is composed of at least 16 different subunits, 5 of which are encoded in the nucleus.

It localises to the plastid. Its subcellular location is the chloroplast thylakoid membrane. It catalyses the reaction a plastoquinone + NADH + (n+1) H(+)(in) = a plastoquinol + NAD(+) + n H(+)(out). The enzyme catalyses a plastoquinone + NADPH + (n+1) H(+)(in) = a plastoquinol + NADP(+) + n H(+)(out). Its function is as follows. NDH shuttles electrons from NAD(P)H:plastoquinone, via FMN and iron-sulfur (Fe-S) centers, to quinones in the photosynthetic chain and possibly in a chloroplast respiratory chain. The immediate electron acceptor for the enzyme in this species is believed to be plastoquinone. Couples the redox reaction to proton translocation, and thus conserves the redox energy in a proton gradient. The protein is NAD(P)H-quinone oxidoreductase subunit 3, chloroplastic of Staurastrum punctulatum (Green alga).